The sequence spans 660 residues: Acyl-coenzyme A oxidase acox-1.3 (660 aa).

Residues 146–149 (YAQT), 154–155 (GT), and Gly-188 contribute to the FAD site. Substrate contacts are provided by residues 282-285 (KIGY) and Arg-292. Residues Arg-317 and 337-340 (QQHR) contribute to the FAD site. Residues His-339, Ser-389, His-393, and Gln-401 each contribute to the ATP site. 430-431 (YE) contacts substrate. The Proton acceptor role is filled by Glu-431. Glu-433 lines the FAD pocket. Residues 524–527 (RASR) and Tyr-572 each bind ATP. The Microbody targeting signal motif lies at 658 to 660 (AKL).

Belongs to the acyl-CoA oxidase family. Forms a heterodimer with acox-1.1; the interaction may be important for the stability of acox-1.3. The cofactor is FAD.

The protein resides in the peroxisome. It carries out the reaction asc-C7-CoA + O2 = asc-DeltaC7-CoA + H2O2. The protein operates within lipid metabolism; peroxisomal fatty acid beta-oxidation. Activated by ATP. ATP binding leads to a conformational change that promotes FAD cofactor binding and enzyme activity. ATP binding likely occurs during acox-1.3 folding and/or dimer formation. Its function is as follows. Involved in the first step of peroxisomal beta-oxidation by catalyzing the desaturation of fatty acid-derived side chains of ascaroside pheromones, which regulates development and behavior. Specifically, shortens ascarosides with a 7-carbon side chain (asc-C7). Does not catalyze the desaturation of fatty acids or hydroxylated fatty acids. Involved in the biosynthesis of asc-C6-MK (daumone 2) and asc-delta-C9 (daumone 3) but not asc-C7 (daumone 1); daumones are pheromones produced during unfavourable growth conditions which promote entry into the dauer stage. This chain is Acyl-coenzyme A oxidase acox-1.3, found in Caenorhabditis elegans.